Consider the following 173-residue polypeptide: Small ribosomal subunit protein uS5 (173 aa).

Residues 17-80 enclose the S5 DRBM domain; sequence LREKMIAVNR…EESRRNMIKV (64 aa).

It belongs to the universal ribosomal protein uS5 family. As to quaternary structure, part of the 30S ribosomal subunit. Contacts proteins S4 and S8.

Functionally, with S4 and S12 plays an important role in translational accuracy. In terms of biological role, located at the back of the 30S subunit body where it stabilizes the conformation of the head with respect to the body. The chain is Small ribosomal subunit protein uS5 from Delftia acidovorans (strain DSM 14801 / SPH-1).